A 671-amino-acid chain; its full sequence is UvrABC system protein B (671 aa).

One can recognise a Helicase ATP-binding domain in the interval 26 to 183 (EGLENGLAHQ…RRLSELQYSR (158 aa)). 39-46 (GVTGSGKT) lines the ATP pocket. Positions 92–115 (YYDYYQPEAYVPSSDTFIEKDASV) match the Beta-hairpin motif. The Helicase C-terminal domain maps to 431-597 (QVDDLLSEIR…GLNKKIGDIL (167 aa)). The 36-residue stretch at 631-666 (DQKIRELEAKMYTYAQNLEFEQAAELRDQVHQLRQQ) folds into the UVR domain.

This sequence belongs to the UvrB family. As to quaternary structure, forms a heterotetramer with UvrA during the search for lesions. Interacts with UvrC in an incision complex.

Its subcellular location is the cytoplasm. The UvrABC repair system catalyzes the recognition and processing of DNA lesions. A damage recognition complex composed of 2 UvrA and 2 UvrB subunits scans DNA for abnormalities. Upon binding of the UvrA(2)B(2) complex to a putative damaged site, the DNA wraps around one UvrB monomer. DNA wrap is dependent on ATP binding by UvrB and probably causes local melting of the DNA helix, facilitating insertion of UvrB beta-hairpin between the DNA strands. Then UvrB probes one DNA strand for the presence of a lesion. If a lesion is found the UvrA subunits dissociate and the UvrB-DNA preincision complex is formed. This complex is subsequently bound by UvrC and the second UvrB is released. If no lesion is found, the DNA wraps around the other UvrB subunit that will check the other stand for damage. The polypeptide is UvrABC system protein B (Yersinia pseudotuberculosis serotype IB (strain PB1/+)).